Consider the following 275-residue polypeptide: 3-methyl-2-oxobutanoate hydroxymethyltransferase (275 aa).

The Mg(2+) site is built by Asp-51 and Asp-90. Residues Asp-51 to Ser-52, Asp-90, and Lys-120 contribute to the 3-methyl-2-oxobutanoate site. Glu-122 is a Mg(2+) binding site. The active-site Proton acceptor is Glu-189.

The protein belongs to the PanB family. In terms of assembly, homodecamer; pentamer of dimers. It depends on Mg(2+) as a cofactor.

It is found in the cytoplasm. It catalyses the reaction 3-methyl-2-oxobutanoate + (6R)-5,10-methylene-5,6,7,8-tetrahydrofolate + H2O = 2-dehydropantoate + (6S)-5,6,7,8-tetrahydrofolate. It functions in the pathway cofactor biosynthesis; (R)-pantothenate biosynthesis; (R)-pantoate from 3-methyl-2-oxobutanoate: step 1/2. Its function is as follows. Catalyzes the reversible reaction in which hydroxymethyl group from 5,10-methylenetetrahydrofolate is transferred onto alpha-ketoisovalerate to form ketopantoate. This Phenylobacterium zucineum (strain HLK1) protein is 3-methyl-2-oxobutanoate hydroxymethyltransferase.